A 29-amino-acid chain; its full sequence is Protein Tat (29 aa).

The disordered stretch occupies residues 1 to 29 (PSSQPRGDPTGQEEPKKKVEKKTTTDPFD). The short motif at 6 to 8 (RGD) is the Cell attachment site element. Basic and acidic residues predominate over residues 13 to 29 (EEPKKKVEKKTTTDPFD).

It belongs to the lentiviruses Tat family. In terms of assembly, interacts with host CCNT1. Associates with the P-TEFb complex composed at least of Tat, P-TEFb (CDK9 and CCNT1), TAR RNA, RNA Pol II. Recruits the HATs CREBBP, TAF1/TFIID, EP300, PCAF and GCN5L2. Interacts with host KAT5/Tip60; this interaction targets the latter to degradation. Interacts with the host deacetylase SIRT1. Interacts with host capping enzyme RNGTT; this interaction stimulates RNGTT. Binds to host KDR, and to the host integrins ITGAV/ITGB3 and ITGA5/ITGB1. Interacts with host KPNB1/importin beta-1 without previous binding to KPNA1/importin alpha-1. Interacts with EIF2AK2. Interacts with host nucleosome assembly protein NAP1L1; this interaction may be required for the transport of Tat within the nucleus, since the two proteins interact at the nuclear rim. Interacts with host C1QBP/SF2P32; this interaction involves lysine-acetylated Tat. Interacts with the host chemokine receptors CCR2, CCR3 and CXCR4. Interacts with host DPP4/CD26; this interaction may trigger an anti-proliferative effect. Interacts with host LDLR. Interacts with the host extracellular matrix metalloproteinase MMP1. Interacts with host PRMT6; this interaction mediates Tat's methylation. Interacts with, and is ubiquitinated by MDM2/Hdm2. Interacts with host PSMC3 and HTATIP2. Interacts with STAB1; this interaction may overcome SATB1-mediated repression of IL2 and IL2RA (interleukin) in T cells by binding to the same domain than HDAC1. Interacts (when acetylated) with human CDK13, thereby increasing HIV-1 mRNA splicing and promoting the production of the doubly spliced HIV-1 protein Nef. In terms of processing, acetylation by EP300, CREBBP, GCN5L2/GCN5 and PCAF regulates the transactivation activity of Tat. Phosphorylated by EIF2AK2 on serine and threonine residues adjacent to the basic region important for TAR RNA binding and function. Phosphorylation of Tat by EIF2AK2 is dependent on the prior activation of EIF2AK2 by dsRNA. Post-translationally, asymmetrical arginine methylation by host PRMT6 seems to diminish the transactivation capacity of Tat and affects the interaction with host CCNT1. In terms of processing, polyubiquitination by MDM2 does not target Tat to degradation, but activates its transactivation function and fosters interaction with CCNT1 and TAR RNA.

The protein resides in the host nucleus. The protein localises to the host nucleolus. It localises to the host cytoplasm. Its subcellular location is the secreted. In terms of biological role, transcriptional activator that increases RNA Pol II processivity, thereby increasing the level of full-length viral transcripts. Recognizes a hairpin structure at the 5'-LTR of the nascent viral mRNAs referred to as the transactivation responsive RNA element (TAR) and recruits the cyclin T1-CDK9 complex (P-TEFb complex) that will in turn hyperphosphorylate the RNA polymerase II to allow efficient elongation. The CDK9 component of P-TEFb and other Tat-activated kinases hyperphosphorylate the C-terminus of RNA Pol II that becomes stabilized and much more processive. Other factors such as HTATSF1/Tat-SF1, SUPT5H/SPT5, and HTATIP2 are also important for Tat's function. Besides its effect on RNA Pol II processivity, Tat induces chromatin remodeling of proviral genes by recruiting the histone acetyltransferases (HATs) CREBBP, EP300 and PCAF to the chromatin. This also contributes to the increase in proviral transcription rate, especially when the provirus integrates in transcriptionally silent region of the host genome. To ensure maximal activation of the LTR, Tat mediates nuclear translocation of NF-kappa-B by interacting with host RELA. Through its interaction with host TBP, Tat may also modulate transcription initiation. Tat can reactivate a latently infected cell by penetrating in it and transactivating its LTR promoter. In the cytoplasm, Tat is thought to act as a translational activator of HIV-1 mRNAs. Its function is as follows. Extracellular circulating Tat can be endocytosed by surrounding uninfected cells via the binding to several surface receptors such as CD26, CXCR4, heparan sulfate proteoglycans (HSPG) or LDLR. Neurons are rarely infected, but they internalize Tat via their LDLR. Endosomal low pH allows Tat to cross the endosome membrane to enter the cytosol and eventually further translocate into the nucleus, thereby inducing severe cell dysfunctions ranging from cell activation to cell death. Through its interaction with nuclear HATs, Tat is potentially able to control the acetylation-dependent cellular gene expression. Tat seems to inhibit the HAT activity of KAT5/Tip60 and TAF1, and consequently modify the expression of specific cellular genes. Modulates the expression of many cellular genes involved in cell survival, proliferation or in coding for cytokines (such as IL10) or cytokine receptors. May be involved in the derepression of host interleukin IL2 expression. Mediates the activation of cyclin-dependent kinases and dysregulation of microtubule network. Tat plays a role in T-cell and neurons apoptosis. Tat induced neurotoxicity and apoptosis probably contribute to neuroAIDS. Host extracellular matrix metalloproteinase MMP1 cleaves Tat and decreases Tat's mediated neurotoxicity. Circulating Tat also acts as a chemokine-like and/or growth factor-like molecule that binds to specific receptors on the surface of the cells, affecting many cellular pathways. In the vascular system, Tat binds to ITGAV/ITGB3 and ITGA5/ITGB1 integrins dimers at the surface of endothelial cells and competes with bFGF for heparin-binding sites, leading to an excess of soluble bFGF. Binds to KDR/VEGFR-2. All these Tat-mediated effects enhance angiogenesis in Kaposi's sarcoma lesions. This is Protein Tat from Homo sapiens (Human).